A 330-amino-acid polypeptide reads, in one-letter code: D-alanine--D-alanine ligase (330 aa).

Positions 122–323 (NRFLSGFGIR…MKEVLCTIIR (202 aa)) constitute an ATP-grasp domain. An ATP-binding site is contributed by 151–206 (TARMGLPLFVKPNVGGSSIATTKVVEAAQLLPAIGQAFSEGEEVMIERLICGTEVT). Residues Asp277, Glu290, and Asn292 each coordinate Mg(2+).

The protein belongs to the D-alanine--D-alanine ligase family. Requires Mg(2+) as cofactor. It depends on Mn(2+) as a cofactor.

The protein localises to the cytoplasm. The catalysed reaction is 2 D-alanine + ATP = D-alanyl-D-alanine + ADP + phosphate + H(+). The protein operates within cell wall biogenesis; peptidoglycan biosynthesis. Its function is as follows. Cell wall formation. This is D-alanine--D-alanine ligase from Porphyromonas gingivalis (strain ATCC 33277 / DSM 20709 / CIP 103683 / JCM 12257 / NCTC 11834 / 2561).